The sequence spans 272 residues: Putative phosphoenolpyruvate synthase regulatory protein (272 aa).

152 to 159 (GVSRCGKT) contacts ADP.

This sequence belongs to the pyruvate, phosphate/water dikinase regulatory protein family. PSRP subfamily.

The catalysed reaction is [pyruvate, water dikinase] + ADP = [pyruvate, water dikinase]-phosphate + AMP + H(+). The enzyme catalyses [pyruvate, water dikinase]-phosphate + phosphate + H(+) = [pyruvate, water dikinase] + diphosphate. In terms of biological role, bifunctional serine/threonine kinase and phosphorylase involved in the regulation of the phosphoenolpyruvate synthase (PEPS) by catalyzing its phosphorylation/dephosphorylation. The polypeptide is Putative phosphoenolpyruvate synthase regulatory protein (Pseudomonas fluorescens (strain ATCC BAA-477 / NRRL B-23932 / Pf-5)).